The sequence spans 311 residues: Aspartate carbamoyltransferase catalytic subunit (311 aa).

Carbamoyl phosphate contacts are provided by Arg-55 and Thr-56. Position 85 (Lys-85) interacts with L-aspartate. 3 residues coordinate carbamoyl phosphate: Arg-106, His-135, and Gln-138. Positions 168 and 230 each coordinate L-aspartate. Residues Leu-268 and Pro-269 each coordinate carbamoyl phosphate.

The protein belongs to the aspartate/ornithine carbamoyltransferase superfamily. ATCase family. As to quaternary structure, heterododecamer (2C3:3R2) of six catalytic PyrB chains organized as two trimers (C3), and six regulatory PyrI chains organized as three dimers (R2).

It catalyses the reaction carbamoyl phosphate + L-aspartate = N-carbamoyl-L-aspartate + phosphate + H(+). It functions in the pathway pyrimidine metabolism; UMP biosynthesis via de novo pathway; (S)-dihydroorotate from bicarbonate: step 2/3. Its function is as follows. Catalyzes the condensation of carbamoyl phosphate and aspartate to form carbamoyl aspartate and inorganic phosphate, the committed step in the de novo pyrimidine nucleotide biosynthesis pathway. This is Aspartate carbamoyltransferase catalytic subunit from Serratia proteamaculans (strain 568).